The following is a 691-amino-acid chain: MAQDDKGKKLRRSCVESFVGLSDELKAQLYQCVLLINDAYETIYDPSDLNRVVEDVCIRIMKECSKLGALCGLFTDINMFNLFCFFRASRMRTKGAAGYNVPCAEASQGIIRILTERILFCTEKAFLTAACSGVSLPPAICKLLHEIYTEMKAKCLGAWRRLVCNRRPIMILTSSLLKLYNTYDTAGLLSEQSRALCLLVFQPVYLPRIMAPLEIMTKGQLAPENFYSITGSAEKRRPITTGKVTGLSYPGSGLMPESLILPILEPGLLPASMVDLSDVLAKPAVILSAPALSQFVISKPHPNMPHTVSIIPFNPSGTDPAFISTWQAASQNMVYNTSTAPLKPATGSSQTVSVKAVAQGAVITATTVPQAMPARGTGGELPVMSASTPARDQVAACFVAENTGDSPDNPSSFLTSCHPCDPNTVIVAQQFQPPQCVTLLQVTCAPSSTPPPDSTVRAPVVQLPTVVPLPASAFLPALAQPEASGEELPGGHDGDQGVPCRDSTAAATAAEATTPKRKQRSKERSSKKRKALTVPEADTTPSTTTPGTSLGSITTPQDVHATDVATSEGPSEAQPPLLSLPPPLDVDQSLFALLDEAGPETWDVGSPLSPTDDALLSSILQGLYQLDTPPPLRSPSPASFGPESPADIPSPSGGEYTQLQPVRATSATPANEVQESGTLYQLHQWRNYFRD.

Threonine 366 and threonine 367 each carry an O-linked (GlcNAc) threonine; by host glycan. Disordered regions lie at residues 482–582 (EASG…SLPP) and 626–677 (LDTP…QESG). Low complexity predominate over residues 504-513 (TAAATAAEAT). The span at 515–531 (PKRKQRSKERSSKKRKA) shows a compositional bias: basic residues. The span at 539 to 556 (TTPSTTTPGTSLGSITTP) shows a compositional bias: low complexity. Residues 655–677 (EYTQLQPVRATSATPANEVQESG) show a composition bias toward polar residues.

It belongs to the herpesviridae TAF50 family. In terms of assembly, homotetramer. Interacts with KTA/ORF57. Interacts with host PARP1; this interaction negatively regulates RTA/ORF50 transactivation activity. Interacts with host SMC5 and SMC6; these interactions remove the repressive chromatin structure to allow viral reactivation. Interacts with host POU2F1; this interaction enhances RTA/ORF50-mediated transactivation of several viral promoters including K-bZIP promoter.

It localises to the host nucleus. The enzyme catalyses S-ubiquitinyl-[E2 ubiquitin-conjugating enzyme]-L-cysteine + [acceptor protein]-L-lysine = [E2 ubiquitin-conjugating enzyme]-L-cysteine + N(6)-ubiquitinyl-[acceptor protein]-L-lysine.. In terms of biological role, transcriptional transactivator that is necessary and sufficient for reactivation of the virus from latency. Acts post-transcriptionally and transcriptionally to regulate viral lytic gene expression and synergistically with ORF57 activates certain early and late viral promoters including its own promoter. Autostimulation on its promoter is mediated by the formation of a ternary complex between ORF50 and the cellular components HGMB1 and POU2F1. Also possesses a bimodal activity in targeting proteins for degradation through using its own E3 ligase activity or by stabilizing and chaperoning host E3 ligases. These activities help to subvert the host innate and adaptive immune responses while also modulating the host transcriptome and protein landscape to promote virus production. For instance, targets the host SMC5/6 complex for ubiquitination and subsequent degradation through the ubiquitin-proteasome during reactivation while during latency, host SMC5/6 complex binds to the viral episome and condenses viral chromatin, creating a repressive chromatin structure to silence genome transcription. Hijacks the cellular E3 ligase complex RNF20/40 to increase the level of transcriptionally active RNA polymerase II on viral gene promoters thereby facilitating lytic gene expression. Acts as a SUMO-targeting ubiquitin ligase and affects general sumoylation of cellular proteins. Promotes the polyubiquitination and subsequent degradation of host MYD88 and thereby inhibits MYD88-mediated TLR4 signaling. Induces the degradation of vFLIP/ORF71 together with cellular ubiquitin ligase ITCH to prevent vFLIP-induced NF-kappa-B signaling. This chain is Replication and transcription activator (ORF50), found in Homo sapiens (Human).